Reading from the N-terminus, the 624-residue chain is tRNA uridine 5-carboxymethylaminomethyl modification enzyme MnmG (624 aa).

FAD contacts are provided by residues 13 to 18, valine 125, and serine 180; that span reads GAGHAG. 272 to 286 contributes to the NAD(+) binding site; that stretch reads GPRYCPSIEDKVVKF. Glutamine 369 serves as a coordination point for FAD.

The protein belongs to the MnmG family. In terms of assembly, homodimer. Heterotetramer of two MnmE and two MnmG subunits. FAD is required as a cofactor.

Its subcellular location is the cytoplasm. Its function is as follows. NAD-binding protein involved in the addition of a carboxymethylaminomethyl (cmnm) group at the wobble position (U34) of certain tRNAs, forming tRNA-cmnm(5)s(2)U34. The sequence is that of tRNA uridine 5-carboxymethylaminomethyl modification enzyme MnmG from Thermodesulfovibrio yellowstonii (strain ATCC 51303 / DSM 11347 / YP87).